Reading from the N-terminus, the 290-residue chain is Endo-1,4-beta-xylanase B (290 aa).

Positions 1–19 (MVSFNSLLVAVSAATCALA) are cleaved as a signal peptide. Asn-26 carries an N-linked (GlcNAc...) asparagine glycan. A GH11 domain is found at 34 to 222 (QSTPAGTGTN…SSGSSTVTVN (189 aa)). Residue Glu-118 is the Nucleophile of the active site. Glu-209 acts as the Proton donor in catalysis. The tract at residues 223-248 (PAGGVTSPIAPTGPSSVSTTPSGPSS) is disordered. The segment covering 234–248 (TGPSSVSTTPSGPSS) has biased composition (low complexity). The CBM1 domain maps to 255 to 290 (TCSALYGQCGGQGWTGPTCCSSGTCKFSNNWYSQCL).

Belongs to the glycosyl hydrolase 11 (cellulase G) family.

The protein resides in the secreted. It catalyses the reaction Endohydrolysis of (1-&gt;4)-beta-D-xylosidic linkages in xylans.. It functions in the pathway glycan degradation; xylan degradation. In terms of biological role, endo-1,4-beta-xylanase involved in the hydrolysis of xylan, a major structural heterogeneous polysaccharide found in plant biomass representing the second most abundant polysaccharide in the biosphere, after cellulose. This chain is Endo-1,4-beta-xylanase B (xynB), found in Phanerodontia chrysosporium (White-rot fungus).